A 299-amino-acid chain; its full sequence is Probable lipid kinase YegS (299 aa).

The region spanning 2–133 (AEFPASLLIL…IDMAQVNKQT (132 aa)) is the DAGKc domain. Residues Thr40, 66 to 72 (GDGTINE), and Thr95 contribute to the ATP site. Residues Leu215, Asp218, and Leu220 each coordinate Mg(2+). Glu271 (proton acceptor) is an active-site residue.

Belongs to the diacylglycerol/lipid kinase family. YegS lipid kinase subfamily. Requires Mg(2+) as cofactor. Ca(2+) is required as a cofactor.

The protein resides in the cytoplasm. Functionally, probably phosphorylates lipids; the in vivo substrate is unknown. This is Probable lipid kinase YegS from Escherichia coli O17:K52:H18 (strain UMN026 / ExPEC).